A 448-amino-acid chain; its full sequence is Trigger factor (448 aa).

The region spanning 162–243 (GDFVQIDLNA…VRTVKEKELP (82 aa)) is the PPIase FKBP-type domain.

This sequence belongs to the FKBP-type PPIase family. Tig subfamily.

It localises to the cytoplasm. It catalyses the reaction [protein]-peptidylproline (omega=180) = [protein]-peptidylproline (omega=0). Functionally, involved in protein export. Acts as a chaperone by maintaining the newly synthesized protein in an open conformation. Functions as a peptidyl-prolyl cis-trans isomerase. In Salinispora arenicola (strain CNS-205), this protein is Trigger factor.